The primary structure comprises 116 residues: Ribosome-binding factor A (116 aa).

The protein belongs to the RbfA family. Monomer. Binds 30S ribosomal subunits, but not 50S ribosomal subunits or 70S ribosomes.

Its subcellular location is the cytoplasm. One of several proteins that assist in the late maturation steps of the functional core of the 30S ribosomal subunit. Associates with free 30S ribosomal subunits (but not with 30S subunits that are part of 70S ribosomes or polysomes). Required for efficient processing of 16S rRNA. May interact with the 5'-terminal helix region of 16S rRNA. The sequence is that of Ribosome-binding factor A from Staphylococcus epidermidis (strain ATCC 35984 / DSM 28319 / BCRC 17069 / CCUG 31568 / BM 3577 / RP62A).